The primary structure comprises 703 residues: WPP domain-interacting tail-anchored protein 1 (703 aa).

The segment covering 1-12 has biased composition (basic and acidic residues); the sequence is METETEHDRTVS. Disordered stretches follow at residues 1-27 and 86-107; these read METETEHDRTVSVDDNDSLVPEPSSTK and FVSKKEEDEEEPSSNVDDDDDS. Residues 92–107 are compositionally biased toward acidic residues; sequence EDEEEPSSNVDDDDDS. The stretch at 118–183 forms a coiled coil; sequence SSILNSEVKE…MEQVVEMKKQ (66 aa). The segment at 189–208 is disordered; the sequence is RLSSGLDEQGSWSGGQTSVS. Over residues 198-208 the composition is skewed to polar residues; the sequence is GSWSGGQTSVS. 3 coiled-coil regions span residues 236 to 265, 318 to 461, and 500 to 604; these read LEKSLAKEMELEKKLSESRNTERELEMKLY, KRED…RDKG, and STVS…SREN. The helical transmembrane segment at 679–699 threads the bilayer; the sequence is FKHILVAILVILISSIAYVIS.

In terms of assembly, homodimer. Component of Ran complexes at least composed of WIT1 or WIT2, RANGAP1 or RANGAP2, and WIP1 or WIP2 or WIP3. Interacts with WIP2, WPP1/MAF1, WPP2/MAF2, RANGAP1 and RANGAP2. Component of a ternary complex composed of WPP1, HSP70-1 and WIT1. Interacts with KAKU1. Interacts with WIP1. As to expression, ubiquitous.

The protein resides in the nucleus envelope. It localises to the nucleus membrane. In terms of biological role, together with WIT2, required for the nuclear envelope docking of RANGAP proteins in root tips. The protein is WPP domain-interacting tail-anchored protein 1 (WIT1) of Arabidopsis thaliana (Mouse-ear cress).